The chain runs to 367 residues: Methylated-thiol--coenzyme M methyltransferase (367 aa).

Residues His236, Cys238, and Cys313 each contribute to the Zn(2+) site.

The protein belongs to the uroporphyrinogen decarboxylase family. Homodimer. Requires Zn(2+) as cofactor.

The enzyme catalyses methanethiol + coenzyme M = methyl-coenzyme M + hydrogen sulfide + H(+). Functionally, methyltransferase involved in methanogenesis from methylated-thiols. Catalyzes two successive steps: mediates the transfer of a methyl group from the substrate to the cobalt cofactor of a methylated-thiol-specific corrinoid protein (MtsB), and the subsequent transfer of the methyl group from the corrinoid protein to coenzyme M. This Methanosarcina mazei (strain ATCC BAA-159 / DSM 3647 / Goe1 / Go1 / JCM 11833 / OCM 88) (Methanosarcina frisia) protein is Methylated-thiol--coenzyme M methyltransferase (mtsA).